The following is a 323-amino-acid chain: Beta-ketoacyl-[acyl-carrier-protein] synthase III 1 (323 aa).

Catalysis depends on residues Cys-114 and His-254. The interval 255–259 (QANLR) is ACP-binding. Residue Asn-284 is part of the active site.

Belongs to the thiolase-like superfamily. FabH family. Homodimer.

Its subcellular location is the cytoplasm. The enzyme catalyses malonyl-[ACP] + acetyl-CoA + H(+) = 3-oxobutanoyl-[ACP] + CO2 + CoA. The protein operates within lipid metabolism; fatty acid biosynthesis. Catalyzes the condensation reaction of fatty acid synthesis by the addition to an acyl acceptor of two carbons from malonyl-ACP. Catalyzes the first condensation reaction which initiates fatty acid synthesis and may therefore play a role in governing the total rate of fatty acid production. Possesses both acetoacetyl-ACP synthase and acetyl transacylase activities. Its substrate specificity determines the biosynthesis of branched-chain and/or straight-chain of fatty acids. The protein is Beta-ketoacyl-[acyl-carrier-protein] synthase III 1 of Lactiplantibacillus plantarum (strain ATCC BAA-793 / NCIMB 8826 / WCFS1) (Lactobacillus plantarum).